A 502-amino-acid polypeptide reads, in one-letter code: Probable cytosol aminopeptidase (502 aa).

K269 and D274 together coordinate Mn(2+). The active site involves K281. 3 residues coordinate Mn(2+): D292, D351, and E353. Residue R355 is part of the active site.

This sequence belongs to the peptidase M17 family. Mn(2+) is required as a cofactor.

It localises to the cytoplasm. It catalyses the reaction Release of an N-terminal amino acid, Xaa-|-Yaa-, in which Xaa is preferably Leu, but may be other amino acids including Pro although not Arg or Lys, and Yaa may be Pro. Amino acid amides and methyl esters are also readily hydrolyzed, but rates on arylamides are exceedingly low.. The enzyme catalyses Release of an N-terminal amino acid, preferentially leucine, but not glutamic or aspartic acids.. Its function is as follows. Presumably involved in the processing and regular turnover of intracellular proteins. Catalyzes the removal of unsubstituted N-terminal amino acids from various peptides. The protein is Probable cytosol aminopeptidase of Shewanella denitrificans (strain OS217 / ATCC BAA-1090 / DSM 15013).